A 654-amino-acid polypeptide reads, in one-letter code: Protein SERAC1 (654 aa).

Residues 32-54 (NIIKFTGSLILGGSLFLTYEVLA) traverse the membrane as a helical segment.

The protein belongs to the SERAC1 family. As to expression, widely expressed, with predominant expression in skeletal muscle and brain. In the brain, highest levels are found in the frontal and occipital cortices, cerebellum and hippocampus.

Its subcellular location is the mitochondrion membrane. It is found in the endoplasmic reticulum. It localises to the mitochondrion. In terms of biological role, facilitates the transport of serine from the cytosol to the mitochondria by interacting with and stabilizing Sideroflexin-1 (SFXN1), a mitochondrial serine transporter, playing a fundamental role in the one-carbon cycle responsible for the synthesis of nucleotides needed for mitochondrial DNA replication. Plays an important role in the phosphatidylglycerol (PG) remodeling that is essential for both mitochondrial function and intracellular cholesterol trafficking. Specifically involved in the exchange of the sn-1 acyl chain from PG 16:0/18:1(9Z) (also known as 1-hexadecanoyl-2-(9Z-octadecenoyl)-sn-glycero-3-phospho-(1'-sn-glycerol)) to PG 18:0/18:1(9Z) (also known as 1-octadecanoyl-2-(9Z-octadecenoyl)-sn-glycero-3-phospho-(1'-sn-glycerol)), a step needed in the bis(monoacylglycerol)phosphate biosynthetic pathway. May have acyltransferase activity although the mechanism for PG remodeling has not been determined. In Homo sapiens (Human), this protein is Protein SERAC1 (SERAC1).